Here is a 466-residue protein sequence, read N- to C-terminus: Trigger factor (466 aa).

Positions 162 to 243 (GDVVSIDLSA…VRSVKERELP (82 aa)) constitute a PPIase FKBP-type domain. Residues 428–466 (GNTIDTSEFFGKRVSAGEAEEAEPADEGAARAASDEATT) are disordered. Over residues 457 to 466 (ARAASDEATT) the composition is skewed to low complexity.

Belongs to the FKBP-type PPIase family. Tig subfamily.

It is found in the cytoplasm. The catalysed reaction is [protein]-peptidylproline (omega=180) = [protein]-peptidylproline (omega=0). Its function is as follows. Involved in protein export. Acts as a chaperone by maintaining the newly synthesized protein in an open conformation. Functions as a peptidyl-prolyl cis-trans isomerase. The protein is Trigger factor of Mycobacterium tuberculosis (strain ATCC 25177 / H37Ra).